Consider the following 342-residue polypeptide: NADH-quinone oxidoreductase subunit H 1 (342 aa).

The next 8 helical transmembrane spans lie at F7–M27, A78–I98, I120–G140, M166–V186, W193–E213, L245–G265, I284–V304, and K322–F342.

The protein belongs to the complex I subunit 1 family. As to quaternary structure, NDH-1 is composed of 14 different subunits. Subunits NuoA, H, J, K, L, M, N constitute the membrane sector of the complex.

Its subcellular location is the cell inner membrane. It carries out the reaction a quinone + NADH + 5 H(+)(in) = a quinol + NAD(+) + 4 H(+)(out). Its function is as follows. NDH-1 shuttles electrons from NADH, via FMN and iron-sulfur (Fe-S) centers, to quinones in the respiratory chain. The immediate electron acceptor for the enzyme in this species is believed to be ubiquinone. Couples the redox reaction to proton translocation (for every two electrons transferred, four hydrogen ions are translocated across the cytoplasmic membrane), and thus conserves the redox energy in a proton gradient. This subunit may bind ubiquinone. In Cytophaga hutchinsonii (strain ATCC 33406 / DSM 1761 / CIP 103989 / NBRC 15051 / NCIMB 9469 / D465), this protein is NADH-quinone oxidoreductase subunit H 1.